The sequence spans 125 residues: Calcitonin gene-related peptide 1 (125 aa).

Residues M1 to A25 form the signal peptide. A propeptide spanning residues A26–Q77 is cleaved from the precursor. C81 and C86 are joined by a disulfide. F116 carries the post-translational modification Phenylalanine amide. A propeptide spanning residues S122–I125 is cleaved from the precursor.

It belongs to the calcitonin family.

The protein localises to the secreted. Functionally, CGRP1/CALCA is a peptide hormone that induces vasodilation mediated by the CALCRL-RAMP1 receptor complex. Dilates a variety of vessels including the coronary, cerebral and systemic vasculature. Its abundance in the CNS also points toward a neurotransmitter or neuromodulator role. It also elevates platelet cAMP. CGRP1 can also bind and activate CALCR-RAMP1 (AMYR1) receptor complex. In Gallus gallus (Chicken), this protein is Calcitonin gene-related peptide 1 (CALCA).